A 134-amino-acid polypeptide reads, in one-letter code: Profilin-2 (134 aa).

Cysteines 13 and 118 form a disulfide. The short motif at A84–T100 is the Involved in PIP2 interaction element. T114 is modified (phosphothreonine).

Belongs to the profilin family. Occurs in many kinds of cells as a complex with monomeric actin in a 1:1 ratio. In terms of processing, phosphorylated by MAP kinases.

Its subcellular location is the cytoplasm. The protein resides in the cytoskeleton. Binds to actin and affects the structure of the cytoskeleton. At high concentrations, profilin prevents the polymerization of actin, whereas it enhances it at low concentrations. The sequence is that of Profilin-2 from Olea europaea (Common olive).